We begin with the raw amino-acid sequence, 482 residues long: MFEHEQKIMIDRIVKELEENNFAIFAGAGLSAPAGYVNWKELLRPLSIELNLDIDKETDLVSLAQYYVNENHGRNRLTERLIDEVGVAREPTPNHKILAKLPISTYWTTNYDDLIEKALDNEGKIADKKFTKNHLSQTKKGRSAVVYKMHGDASLPDQAIITKDQYESYPLHFAPFVTALSGDLVSKTFLFLGFSFNDPNLDYILSRIRIHFEQNQRQHYCIFRKVNRADYSNDEDFSYNLLKQQFVIKDLARFSIKVVLIDAWNDLTRILEEITKRFRCKNVFLSGSAHEFGSWGQTATELFLSKLGEVLIQEGFKITSGLGLGIGNAFISGAIKEIYNRKYTKIDDYLTMKVFPQFVADPTERKNIWTAWRKDLLSQTGIALFFMGNKIIKDPESGKQTIVLADGMDEEFHIAHELGLKLIPIGASGYKAKELFNQIISDFDHYYPNSSPKFREAFEKLNEEVDEPVKLLSKIHDVIKLI.

The region spanning 3–281 is the Deacetylase sirtuin-type domain; it reads EHEQKIMIDR…EEITKRFRCK (279 aa). NAD(+) is bound by residues Asp-112 and His-150. Catalysis depends on His-150, which acts as the Proton acceptor. Residues 282–482 are SLOG (STALD) domain; the sequence is NVFLSGSAHE…SKIHDVIKLI (201 aa). 3'cADPR is bound by residues Gly-287, Ser-288, Leu-324, Phe-355, Arg-373, Lys-390, Gly-407, and Glu-411.

Belongs to the soluble Thoeris ThsA family. As to quaternary structure, homotetramer in solution.

The catalysed reaction is NAD(+) + H2O = ADP-D-ribose + nicotinamide + H(+). With respect to regulation, in vivo probably activated by a cyclic ADP-D-ribose generated by ThsB (might be 3'cADPR). NAD(+) hydrolyzing component (NADase) of the Thoeris antiviral defense system, composed of ThsA and ThsB (maybe J591_1492). As purified, has NADase activity that is not activated by any tested cADPR isomers; binds 3'cADPR better than 2'cADPR. It was suggested the purified protein is already in a fully active state. Upon activation binds and hydrolyzes NAD(+), leading to cell death and inhibition of phage replication. This Acinetobacter baumannii (strain 532279) protein is NAD(+) hydrolase ThsA.